Here is a 344-residue protein sequence, read N- to C-terminus: Small neutral protease regulatory protein (344 aa).

The region spanning 1–60 (MELEVRHLRALCAIADAGSLHRAARRLGVAQPTLSTQLTRIEQALGGPLFTRERTGCRPT) is the HTH lysR-type domain. The H-T-H motif DNA-binding region spans 20-39 (LHRAARRLGVAQPTLSTQLT). The tract at residues 322–344 (SCGRAEGSRSRRPRDVAPPRPIG) is disordered. Over residues 327 to 338 (EGSRSRRPRDVA) the composition is skewed to basic and acidic residues.

The protein belongs to the LysR transcriptional regulatory family.

Its function is as follows. Transcriptional activator of the gene (snpA) for the small neutral protease. The polypeptide is Small neutral protease regulatory protein (mprR) (Streptomyces lividans).